Consider the following 239-residue polypeptide: Phosphoribosylaminoimidazole-succinocarboxamide synthase (239 aa).

This sequence belongs to the SAICAR synthetase family.

It catalyses the reaction 5-amino-1-(5-phospho-D-ribosyl)imidazole-4-carboxylate + L-aspartate + ATP = (2S)-2-[5-amino-1-(5-phospho-beta-D-ribosyl)imidazole-4-carboxamido]succinate + ADP + phosphate + 2 H(+). The protein operates within purine metabolism; IMP biosynthesis via de novo pathway; 5-amino-1-(5-phospho-D-ribosyl)imidazole-4-carboxamide from 5-amino-1-(5-phospho-D-ribosyl)imidazole-4-carboxylate: step 1/2. In Nitratiruptor sp. (strain SB155-2), this protein is Phosphoribosylaminoimidazole-succinocarboxamide synthase.